The primary structure comprises 445 residues: Tubulin beta-3 chain (445 aa).

The MREI motif motif lies at 1-4 (MREI). Residues glutamine 11, glutamate 69, serine 138, glycine 142, threonine 143, glycine 144, asparagine 204, and asparagine 226 each coordinate GTP. Glutamate 69 contacts Mg(2+). The tract at residues 425 to 445 (YQDATAEEEGEFEEEAEEEAE) is disordered. Acidic residues predominate over residues 429–445 (TAEEEGEFEEEAEEEAE). Position 438 is a 5-glutamyl polyglutamate (glutamate 438).

The protein belongs to the tubulin family. Dimer of alpha and beta chains. A typical microtubule is a hollow water-filled tube with an outer diameter of 25 nm and an inner diameter of 15 nM. Alpha-beta heterodimers associate head-to-tail to form protofilaments running lengthwise along the microtubule wall with the beta-tubulin subunit facing the microtubule plus end conferring a structural polarity. Microtubules usually have 13 protofilaments but different protofilament numbers can be found in some organisms and specialized cells. It depends on Mg(2+) as a cofactor. Post-translationally, some glutamate residues at the C-terminus are polyglycylated, resulting in polyglycine chains on the gamma-carboxyl group. Glycylation is mainly limited to tubulin incorporated into axonemes (cilia and flagella) whereas glutamylation is prevalent in neuronal cells, centrioles, axonemes, and the mitotic spindle. Both modifications can coexist on the same protein on adjacent residues, and lowering polyglycylation levels increases polyglutamylation, and reciprocally. The precise function of polyglycylation is still unclear. Some glutamate residues at the C-terminus are polyglutamylated, resulting in polyglutamate chains on the gamma-carboxyl group. Polyglutamylation plays a key role in microtubule severing by spastin (SPAST). SPAST preferentially recognizes and acts on microtubules decorated with short polyglutamate tails: severing activity by SPAST increases as the number of glutamates per tubulin rises from one to eight, but decreases beyond this glutamylation threshold. As to expression, highly expressed in testis.

The protein resides in the cytoplasm. The protein localises to the cytoskeleton. Functionally, tubulin is the major constituent of microtubules, a cylinder consisting of laterally associated linear protofilaments composed of alpha- and beta-tubulin heterodimers. Microtubules grow by the addition of GTP-tubulin dimers to the microtubule end, where a stabilizing cap forms. Below the cap, tubulin dimers are in GDP-bound state, owing to GTPase activity of alpha-tubulin. TUBB3 plays a role in dorsal root ganglion axon projection towards the spinal cord. In Gallus gallus (Chicken), this protein is Tubulin beta-3 chain.